We begin with the raw amino-acid sequence, 321 residues long: L-Ala-D/L-Glu epimerase (321 aa).

2 residues coordinate substrate: Thr124 and Lys149. The active-site Proton acceptor; specific for (R)-substrate epimerization is Lys151. Residues Asp176, Glu202, and Asp225 each contribute to the Mg(2+) site. Lys247 serves as the catalytic Proton acceptor; specific for (S)-substrate epimerization. Residues Cys275, Asp297, and Asp299 each coordinate substrate.

Belongs to the mandelate racemase/muconate lactonizing enzyme family. In terms of assembly, monomer. The cofactor is Mg(2+).

It catalyses the reaction L-alanyl-L-glutamate = L-alanyl-D-glutamate. The protein operates within cell wall biogenesis; peptidoglycan recycling. Its function is as follows. Catalyzes the epimerization of L-Ala-D-Glu to L-Ala-L-Glu and has a role in the recycling of the murein peptide, of which L-Ala-D-Glu is a component. Is also able to catalyze the reverse reaction and the epimerization of all the L-Ala-X dipeptides, except L-Ala-L-Arg, L-Ala-L-Lys and L-Ala-L-Pro. Is also active with L-Gly-L-Glu, L-Phe-L-Glu, and L-Ser-L-Glu, but not with L-Glu-L-Glu, L-Lys-L-Glu, L-Pro-L-Glu, L-Lys-L-Ala, or D-Ala-D-Ala. The chain is L-Ala-D/L-Glu epimerase (ycjG) from Escherichia coli (strain K12).